We begin with the raw amino-acid sequence, 323 residues long: Beta-ketoacyl-[acyl-carrier-protein] synthase III (323 aa).

Residues C114 and H250 contribute to the active site. Residues 251–255 (QANIR) are ACP-binding. Residue N280 is part of the active site.

This sequence belongs to the thiolase-like superfamily. FabH family. As to quaternary structure, homodimer.

It localises to the cytoplasm. The enzyme catalyses malonyl-[ACP] + acetyl-CoA + H(+) = 3-oxobutanoyl-[ACP] + CO2 + CoA. The protein operates within lipid metabolism; fatty acid biosynthesis. In terms of biological role, catalyzes the condensation reaction of fatty acid synthesis by the addition to an acyl acceptor of two carbons from malonyl-ACP. Catalyzes the first condensation reaction which initiates fatty acid synthesis and may therefore play a role in governing the total rate of fatty acid production. Possesses both acetoacetyl-ACP synthase and acetyl transacylase activities. Its substrate specificity determines the biosynthesis of branched-chain and/or straight-chain of fatty acids. This Ruegeria sp. (strain TM1040) (Silicibacter sp.) protein is Beta-ketoacyl-[acyl-carrier-protein] synthase III.